Reading from the N-terminus, the 143-residue chain is Hemoglobin subunit alpha-1 (143 aa).

N-acetylserine is present on Ser2. Residues Ser2–Arg143 form the Globin domain. His60 lines the O2 pocket. Heme b is bound at residue His89.

The protein belongs to the globin family. Hb1 is a heterotetramer of two alpha-1 chains and two beta-1 chains. In terms of tissue distribution, red blood cells.

Involved in oxygen transport from gills to the various peripheral tissues. The protein is Hemoglobin subunit alpha-1 of Liparis tunicatus (Kelp snailfish).